The following is a 316-amino-acid chain: Ornithine carbamoyltransferase (316 aa).

Carbamoyl phosphate is bound by residues 57–60 (STRT), Q84, R108, and 135–138 (HPCQ). L-ornithine contacts are provided by residues N166, D230, and 234–235 (SM). Carbamoyl phosphate is bound by residues 269 to 270 (CL) and R297.

The protein belongs to the aspartate/ornithine carbamoyltransferase superfamily. OTCase family.

It localises to the cytoplasm. The enzyme catalyses carbamoyl phosphate + L-ornithine = L-citrulline + phosphate + H(+). It participates in amino-acid degradation; L-arginine degradation via ADI pathway; carbamoyl phosphate from L-arginine: step 2/2. Functionally, reversibly catalyzes the transfer of the carbamoyl group from carbamoyl phosphate (CP) to the N(epsilon) atom of ornithine (ORN) to produce L-citrulline. This Bacillus anthracis (strain CDC 684 / NRRL 3495) protein is Ornithine carbamoyltransferase.